Reading from the N-terminus, the 237-residue chain is Ribosomal RNA large subunit methyltransferase E (237 aa).

Residues Gly76, Trp78, Asp99, Asp115, and Asp139 each contribute to the S-adenosyl-L-methionine site. The active-site Proton acceptor is Lys179.

It belongs to the class I-like SAM-binding methyltransferase superfamily. RNA methyltransferase RlmE family.

The protein resides in the cytoplasm. The catalysed reaction is uridine(2552) in 23S rRNA + S-adenosyl-L-methionine = 2'-O-methyluridine(2552) in 23S rRNA + S-adenosyl-L-homocysteine + H(+). Its function is as follows. Specifically methylates the uridine in position 2552 of 23S rRNA at the 2'-O position of the ribose in the fully assembled 50S ribosomal subunit. The protein is Ribosomal RNA large subunit methyltransferase E of Rhodopseudomonas palustris (strain TIE-1).